The primary structure comprises 299 residues: NAD kinase 1 (299 aa).

Asp-62 functions as the Proton acceptor in the catalytic mechanism. NAD(+)-binding positions include 62–63, Lys-67, 143–144, Lys-173, and Asp-175; these read DG and ND.

This sequence belongs to the NAD kinase family. It depends on a divalent metal cation as a cofactor.

The protein localises to the cytoplasm. It carries out the reaction NAD(+) + ATP = ADP + NADP(+) + H(+). Functionally, involved in the regulation of the intracellular balance of NAD and NADP, and is a key enzyme in the biosynthesis of NADP. Catalyzes specifically the phosphorylation on 2'-hydroxyl of the adenosine moiety of NAD to yield NADP. The protein is NAD kinase 1 of Prochlorococcus marinus subsp. pastoris (strain CCMP1986 / NIES-2087 / MED4).